Consider the following 570-residue polypeptide: Probable electron transfer flavoprotein-ubiquinone oxidoreductase (570 aa).

13-27 (VVIVGAGPAGLSAAI) contributes to the FAD binding site. The [4Fe-4S] cluster site is built by C515, C539, C542, and C545. The 30-residue stretch at 530–559 (KRFQINAANCVHCKTCDIKDPSQNITWVTP) folds into the 4Fe-4S ferredoxin-type domain.

[4Fe-4S] cluster serves as cofactor. Requires FAD as cofactor.

It catalyses the reaction a ubiquinone + reduced [electron-transfer flavoprotein] = a ubiquinol + oxidized [electron-transfer flavoprotein] + H(+). In terms of biological role, accepts electrons from ETF and reduces ubiquinone. The polypeptide is Probable electron transfer flavoprotein-ubiquinone oxidoreductase (etfD) (Acinetobacter baylyi (strain ATCC 33305 / BD413 / ADP1)).